Consider the following 409-residue polypeptide: Inner membrane transport protein YqeG (409 aa).

At 1 to 25 (MSNIWSKEETLWSFALYGTAVGAGT) the chain is on the periplasmic side. The helical transmembrane segment at 26 to 46 (LFLPIQLGSAGAVVLFITALV) threads the bilayer. At 47 to 87 (AWPLTYWPHKALCQFILSSKTSAGEGITGAVTHYYGKKIGN) the chain is on the cytoplasmic side. The chain crosses the membrane as a helical span at residues 88 to 108 (LITTLYFIAFFVVVLIYAVAI). Residues 109–127 (TNSLTEQLAKHMVIDLRIR) lie on the Periplasmic side of the membrane. Residues 128-148 (MLVSLGVVLILNLIFLMGRHA) traverse the membrane as a helical segment. The Cytoplasmic segment spans residues 149-151 (TIR). The chain crosses the membrane as a helical span at residues 152–172 (VMGFLVFPLIAYFLFLSIYLV). Residues 173–193 (GSWQPDLLTTQVEFNQNTLHQ) lie on the Periplasmic side of the membrane. A helical membrane pass occupies residues 194 to 214 (IWISIPVMVFAFSHTPIISTF). Residues 215 to 235 (AIDRREKYGEHAMDKCKKIMK) lie on the Cytoplasmic side of the membrane. Residues 236 to 256 (VAYLIICISVLFFVFSCLLSI) traverse the membrane as a helical segment. Residues 257-276 (PPSYIEAAKEEGVTILSALS) lie on the Periplasmic side of the membrane. Residues 277–297 (MLPNAPAWLSISGIIVAVVAM) form a helical membrane-spanning segment. Residues 298-329 (SKSFLGTYFGVIEGATEVVKTTLQQVGVKKSR) lie on the Cytoplasmic side of the membrane. The chain crosses the membrane as a helical span at residues 330-350 (AFNRALSIMLVSLITFIVCCI). Residues 351–353 (NPN) lie on the Periplasmic side of the membrane. Residues 354-374 (AISMIYAISGPLIAMILFIMP) traverse the membrane as a helical segment. Residues 375–388 (TLSTYLIPALKPWR) are Cytoplasmic-facing. Residues 389–409 (SIGNLITLIVGILCVSVMFFS) traverse the membrane as a helical segment.

This sequence belongs to the amino acid/polyamine transporter 2 family. SdaC/TdcC subfamily.

Its subcellular location is the cell inner membrane. This Escherichia coli O6:H1 (strain CFT073 / ATCC 700928 / UPEC) protein is Inner membrane transport protein YqeG (yqeG).